A 570-amino-acid chain; its full sequence is Urease subunit alpha (570 aa).

A Urease domain is found at 131 to 570; the sequence is GGMDSHIHFI…LPMAQRYFLF (440 aa). Residues histidine 136, histidine 138, and lysine 219 each coordinate Ni(2+). Residue lysine 219 is modified to N6-carboxylysine. Histidine 221 contacts substrate. Residues histidine 248 and histidine 274 each coordinate Ni(2+). Histidine 322 (proton donor) is an active-site residue. A Ni(2+)-binding site is contributed by aspartate 362.

This sequence belongs to the metallo-dependent hydrolases superfamily. Urease alpha subunit family. In terms of assembly, heterotrimer of UreA (gamma), UreB (beta) and UreC (alpha) subunits. Three heterotrimers associate to form the active enzyme. Ni cation is required as a cofactor. Post-translationally, carboxylation allows a single lysine to coordinate two nickel ions.

The protein localises to the cytoplasm. It catalyses the reaction urea + 2 H2O + H(+) = hydrogencarbonate + 2 NH4(+). The protein operates within nitrogen metabolism; urea degradation; CO(2) and NH(3) from urea (urease route): step 1/1. This Allorhizobium ampelinum (strain ATCC BAA-846 / DSM 112012 / S4) (Agrobacterium vitis (strain S4)) protein is Urease subunit alpha.